A 1468-amino-acid chain; its full sequence is Potassium channel K2 (1468 aa).

The next 6 helical transmembrane spans lie at 48–68 (MIYI…YWIY), 146–165 (FNCY…WYIS), 185–209 (IYIY…IISY), 221–240 (LLID…RHFF), 246–264 (IDIY…FLNV), and 285–306 (IILG…IQGI). The segment at residues 326 to 344 (YFYFSIISISTVGYGDIIP) is an intramembrane region (pore-forming). A helical membrane pass occupies residues 351 to 368 (VICIFFIFWTFIWVPIQF). Residues 804-823 (TCARTNESHKNNRLRSRRSQ) form a disordered region. Residues 814-823 (NNRLRSRRSQ) are compositionally biased toward basic residues. Residues 1141-1185 (KSNKNSNNNNKCEQIKQLNNNLTFKKNEKKTKSNKQNTNDTLERR) adopt a coiled-coil conformation.

It is found in the membrane. Its function is as follows. May be involved in transmembrane potassium transport at the subcellular level not affecting bulk potassium transport across the plasma membrane. This chain is Potassium channel K2, found in Plasmodium berghei (strain Anka).